Here is a 298-residue protein sequence, read N- to C-terminus: H-2 class I histocompatibility antigen, alpha chain (298 aa).

Topologically, residues 1 to 244 are extracellular; the sequence is RYEPRARWIE…EPPSSTKTNT (244 aa). The N-linked (GlcNAc...) asparagine glycan is linked to asparagine 43. Cysteine 58 and cysteine 121 are disulfide-bonded. Residue asparagine 133 is glycosylated (N-linked (GlcNAc...) asparagine). An Ig-like C1-type domain is found at 142–230; the sequence is PKAHVTHHRR…EGLPEPLTLR (89 aa). A disulfide bond links cysteine 160 and cysteine 216. The helical transmembrane segment at 245–265 threads the bilayer; the sequence is VIIAVPVVLGAVVILGAVMAF. Residues 266–298 are Cytoplasmic-facing; that stretch reads VMKRRRNTGGKGGDYALAPVSQSSDMSLPDCKV. The tract at residues 277–298 is disordered; sequence GGDYALAPVSQSSDMSLPDCKV. A phosphoserine mark is found at serine 289 and serine 292.

It belongs to the MHC class I family. As to quaternary structure, heterodimer of an alpha chain and a beta chain (beta-2-microglobulin).

The protein resides in the membrane. Functionally, involved in the presentation of foreign antigens to the immune system. The protein is H-2 class I histocompatibility antigen, alpha chain (H2-D1) of Mus musculus (Mouse).